A 161-amino-acid polypeptide reads, in one-letter code: Interleukin-17F (161 aa).

The N-terminal stretch at 1–28 is a signal peptide; it reads MKGSCETTMVKSLLLLMLGFAIISSGAA. Asn-83 carries N-linked (GlcNAc...) asparagine glycosylation. Intrachain disulfides connect Cys-100/Cys-150 and Cys-105/Cys-152.

It belongs to the IL-17 family. As to quaternary structure, homodimer; disulfide-linked. Heterodimer with IL17A (IL17A-IL17F). Forms complexes with IL17RA and IL17RC receptors with 2:1 binding stoichiometry: two receptor chains for one interleukin molecule. IL17F homodimer forms predominantly complexes with IL17RC homodimer, whereas IL17A-IL17F favors complexes with IL17RA-IL17RC. IL17RA and IL17RC chains cannot distinguish between IL17A and IL17F molecules, potentially enabling the formation of topologically distinct complexes.

The protein localises to the secreted. Functionally, effector cytokine of innate and adaptive immune system involved in antimicrobial host defense and maintenance of tissue integrity. IL17A-IL17F signals via IL17RA-IL17RC heterodimeric receptor complex, triggering homotypic interaction of IL17RA and IL17RC chains with TRAF3IP2 adapter through SEFIR domains. This leads to downstream TRAF6-mediated activation of NF-kappa-B and MAPkinase pathways ultimately resulting in transcriptional activation of cytokines, chemokines, antimicrobial peptides and matrix metalloproteinases, with potential strong immune inflammation. IL17A-IL17F is primarily involved in host defense against extracellular bacteria and fungi by inducing neutrophilic inflammation. As signature effector cytokine of T-helper 17 cells (Th17), primarily induces neutrophil activation and recruitment at infection and inflammatory sites. Stimulates the production of antimicrobial beta-defensins DEFB1, DEFB103A, and DEFB104A by mucosal epithelial cells, limiting the entry of microbes through the epithelial barriers. IL17F homodimer can signal via IL17RC homodimeric receptor complex, triggering downstream activation of TRAF6 and NF-kappa-B signaling pathway. Via IL17RC induces transcriptional activation of IL33, a potent cytokine that stimulates group 2 innate lymphoid cells and adaptive T-helper 2 cells involved in pulmonary allergic response to fungi. Likely via IL17RC, promotes sympathetic innervation of peripheral organs by coordinating the communication between gamma-delta T cells and parenchymal cells. Stimulates sympathetic innervation of thermogenic adipose tissue by driving TGFB1 expression. Regulates the composition of intestinal microbiota and immune tolerance by inducing antimicrobial proteins that specifically control the growth of commensal Firmicutes and Bacteroidetes. This is Interleukin-17F (Il17f) from Rattus norvegicus (Rat).